Here is a 959-residue protein sequence, read N- to C-terminus: Glycine dehydrogenase (decarboxylating) (959 aa).

Residue lysine 707 is modified to N6-(pyridoxal phosphate)lysine.

This sequence belongs to the GcvP family. The glycine cleavage system is composed of four proteins: P, T, L and H. Pyridoxal 5'-phosphate is required as a cofactor.

The catalysed reaction is N(6)-[(R)-lipoyl]-L-lysyl-[glycine-cleavage complex H protein] + glycine + H(+) = N(6)-[(R)-S(8)-aminomethyldihydrolipoyl]-L-lysyl-[glycine-cleavage complex H protein] + CO2. Its function is as follows. The glycine cleavage system catalyzes the degradation of glycine. The P protein binds the alpha-amino group of glycine through its pyridoxal phosphate cofactor; CO(2) is released and the remaining methylamine moiety is then transferred to the lipoamide cofactor of the H protein. This Photobacterium profundum (strain SS9) protein is Glycine dehydrogenase (decarboxylating).